A 339-amino-acid polypeptide reads, in one-letter code: MLLRPRRLPAFSPPSPASPDAELRSAGDVPVTTSDAFATSGGMAEPGSPKAPVSPDSAQRTPWSARETELLLGTLLQPAMWRSLLLDRRQTLPTYRRVSAALARQQVRRTPAQCRRRYKFLKDKLRDSQGQPSGPFDNQIRQLMGLLGDDGPPRVRRRSTGPGRPQRRGRSSLSALAPAPAPVEQEAELPLAAENDEPAPALRFSSSTTKSAGAHRITSSPPLTSTDTLPPEPGHTFESSPTPTPDHDVETPNEPPGLSQGRASSPQVAPQSLNTALLQTLTHLGDISTVLGPLRDQLSTLNQHVEHLRGSFDQTVSLAVGFILGSAASERGILGDLRQ.

2 disordered regions span residues 1 to 62 and 144 to 270; these read MLLR…QRTP and MGLL…QVAP. Phosphoserine occurs at positions 15, 18, 48, and 54. The span at 154–170 shows a compositional bias: basic residues; the sequence is RVRRRSTGPGRPQRRGR. Composition is skewed to low complexity over residues 171–193 and 218–229; these read SSLS…PLAA and TSSPPLTSTDTL. Polar residues predominate over residues 261-270; that stretch reads GRASSPQVAP. The tract at residues 279 to 310 is leucine-zipper; it reads QTLTHLGDISTVLGPLRDQLSTLNQHVEHLRG.

Binds to the N-terminal region of ATF2. Associates with the TFIID complex through interaction with TBP. Post-translationally, phosphorylated. In terms of tissue distribution, expressed mainly in pluripotent cells with expression rapidly down-regulated upon cell differentiation.

Its subcellular location is the nucleus. Functionally, acts as a transcriptional coactivator of ATF2. This chain is Undifferentiated embryonic cell transcription factor 1, found in Mus musculus (Mouse).